A 174-amino-acid chain; its full sequence is UPF0398 protein llmg_0513 (174 aa).

Belongs to the UPF0398 family.

In Lactococcus lactis subsp. cremoris (strain MG1363), this protein is UPF0398 protein llmg_0513.